The primary structure comprises 673 residues: UvrABC system protein B (673 aa).

The Helicase ATP-binding domain maps to 26 to 183; sequence EGLEDGLAHQ…RRLAELQYTR (158 aa). 39–46 is an ATP binding site; it reads GVTGSGKT. A Beta-hairpin motif is present at residues 92–115; it reads YYDYYQPEAYVPSSDTFIEKDASV. The 167-residue stretch at 431-597 folds into the Helicase C-terminal domain; sequence QVDDLLSEIR…GLNKKVVDIL (167 aa). Positions 633 to 668 constitute a UVR domain; sequence QQKIHELEGQMMQHAQNLEFEEAAEIRDQLHQLREL.

It belongs to the UvrB family. As to quaternary structure, forms a heterotetramer with UvrA during the search for lesions. Interacts with UvrC in an incision complex.

Its subcellular location is the cytoplasm. The UvrABC repair system catalyzes the recognition and processing of DNA lesions. A damage recognition complex composed of 2 UvrA and 2 UvrB subunits scans DNA for abnormalities. Upon binding of the UvrA(2)B(2) complex to a putative damaged site, the DNA wraps around one UvrB monomer. DNA wrap is dependent on ATP binding by UvrB and probably causes local melting of the DNA helix, facilitating insertion of UvrB beta-hairpin between the DNA strands. Then UvrB probes one DNA strand for the presence of a lesion. If a lesion is found the UvrA subunits dissociate and the UvrB-DNA preincision complex is formed. This complex is subsequently bound by UvrC and the second UvrB is released. If no lesion is found, the DNA wraps around the other UvrB subunit that will check the other stand for damage. The polypeptide is UvrABC system protein B (Citrobacter koseri (strain ATCC BAA-895 / CDC 4225-83 / SGSC4696)).